Here is a 174-residue protein sequence, read N- to C-terminus: MRAFFVGRFQPYHLGHHEVVKNVLQKVDELIIGIGSAQESHSLENPFTAGERVLMIDRAVDEIKRELGIDKKVYIIPLEDIYRNSLWVAHVCSMVPPFDVVYTNNPLVYRLFKEAGFKVMHTKMYNRNEYHGTEIRRKMLEGEDWEKYVPESVAEIIKEIDGIKRLRDISGRDF.

This sequence belongs to the archaeal NMN adenylyltransferase family.

The protein resides in the cytoplasm. The catalysed reaction is beta-nicotinamide D-ribonucleotide + ATP + H(+) = diphosphate + NAD(+). It participates in cofactor biosynthesis; NAD(+) biosynthesis; NAD(+) from nicotinamide D-ribonucleotide: step 1/1. The polypeptide is Nicotinamide-nucleotide adenylyltransferase (Archaeoglobus fulgidus (strain ATCC 49558 / DSM 4304 / JCM 9628 / NBRC 100126 / VC-16)).